A 325-amino-acid polypeptide reads, in one-letter code: Phospholipid phosphatase-related protein type 1 (325 aa).

An N-linked (GlcNAc...) asparagine glycan is attached at N5. 3 helical membrane-spanning segments follow: residues 13-33 (IIPCFIFVELVIMAGTVLLAY), 67-87 (FISPLVLYCVLAATPTAIIFI), and 127-147 (FIGVFAFGLFATDIFVNAGQV). An N-linked (GlcNAc...) asparagine glycan is attached at N163. Transmembrane regions (helical) follow at residues 201 to 218 (AALSIYSALYATMYITST), 230 to 247 (VLCLGTLCTAFLTGLNRV), and 257 to 277 (VIAGFILGTAVALFLGMCVVH). S307 carries the post-translational modification Phosphoserine. Residue N316 is glycosylated (N-linked (GlcNAc...) asparagine).

This sequence belongs to the PA-phosphatase related phosphoesterase family.

It is found in the cell membrane. The protein resides in the cell projection. The protein localises to the neuron projection. Its function is as follows. May play a role in neurite outgrowth and neurogenesis. The sequence is that of Phospholipid phosphatase-related protein type 1 from Mus musculus (Mouse).